The primary structure comprises 469 residues: Siroheme synthase (469 aa).

The tract at residues 1-203 is precorrin-2 dehydrogenase /sirohydrochlorin ferrochelatase; sequence MDYLPIFTDL…GQEQDAKQEL (203 aa). NAD(+) is bound by residues 22–23 and 43–44; these read DV and PV. Serine 128 carries the post-translational modification Phosphoserine. The segment at 214–469 is uroporphyrinogen-III C-methyltransferase; sequence GQVALIGSGP…LQQSAVVKLA (256 aa). Position 223 (proline 223) interacts with S-adenosyl-L-methionine. Aspartate 246 acts as the Proton acceptor in catalysis. The Proton donor role is filled by lysine 268. S-adenosyl-L-methionine-binding positions include 299 to 301, valine 304, 329 to 330, methionine 381, and glycine 410; these read GGD and TA.

The protein in the N-terminal section; belongs to the precorrin-2 dehydrogenase / sirohydrochlorin ferrochelatase family. In the C-terminal section; belongs to the precorrin methyltransferase family.

It carries out the reaction uroporphyrinogen III + 2 S-adenosyl-L-methionine = precorrin-2 + 2 S-adenosyl-L-homocysteine + H(+). It catalyses the reaction precorrin-2 + NAD(+) = sirohydrochlorin + NADH + 2 H(+). The enzyme catalyses siroheme + 2 H(+) = sirohydrochlorin + Fe(2+). It participates in cofactor biosynthesis; adenosylcobalamin biosynthesis; precorrin-2 from uroporphyrinogen III: step 1/1. Its pathway is cofactor biosynthesis; adenosylcobalamin biosynthesis; sirohydrochlorin from precorrin-2: step 1/1. The protein operates within porphyrin-containing compound metabolism; siroheme biosynthesis; precorrin-2 from uroporphyrinogen III: step 1/1. It functions in the pathway porphyrin-containing compound metabolism; siroheme biosynthesis; siroheme from sirohydrochlorin: step 1/1. It participates in porphyrin-containing compound metabolism; siroheme biosynthesis; sirohydrochlorin from precorrin-2: step 1/1. Its function is as follows. Multifunctional enzyme that catalyzes the SAM-dependent methylations of uroporphyrinogen III at position C-2 and C-7 to form precorrin-2 via precorrin-1. Then it catalyzes the NAD-dependent ring dehydrogenation of precorrin-2 to yield sirohydrochlorin. Finally, it catalyzes the ferrochelation of sirohydrochlorin to yield siroheme. The chain is Siroheme synthase from Photobacterium profundum (strain SS9).